The following is a 534-amino-acid chain: CTP synthase (534 aa).

An amidoligase domain region spans residues 1-266; sequence MKQKFIFVTG…DELIVARLGL (266 aa). Serine 14 contributes to the CTP binding site. Serine 14 provides a ligand contact to UTP. ATP-binding positions include 15 to 20 and aspartate 72; that span reads SIGKGL. Mg(2+)-binding residues include aspartate 72 and glutamate 140. CTP is bound by residues 147–149, 187–192, and lysine 223; these read DIE and KSKPTQ. UTP contacts are provided by residues 187–192 and lysine 223; that span reads KSKPTQ. Residues 291–534 enclose the Glutamine amidotransferase type-1 domain; the sequence is KIGVVGKYVD…HFVKASLKKK (244 aa). Glycine 353 is a binding site for L-glutamine. Cysteine 380 (nucleophile; for glutamine hydrolysis) is an active-site residue. Residues 381–384, glutamate 404, and arginine 464 contribute to the L-glutamine site; that span reads FGMQ. Active-site residues include histidine 509 and glutamate 511.

It belongs to the CTP synthase family. As to quaternary structure, homotetramer.

It catalyses the reaction UTP + L-glutamine + ATP + H2O = CTP + L-glutamate + ADP + phosphate + 2 H(+). It carries out the reaction L-glutamine + H2O = L-glutamate + NH4(+). The catalysed reaction is UTP + NH4(+) + ATP = CTP + ADP + phosphate + 2 H(+). It participates in pyrimidine metabolism; CTP biosynthesis via de novo pathway; CTP from UDP: step 2/2. Its activity is regulated as follows. Allosterically activated by GTP, when glutamine is the substrate; GTP has no effect on the reaction when ammonia is the substrate. The allosteric effector GTP functions by stabilizing the protein conformation that binds the tetrahedral intermediate(s) formed during glutamine hydrolysis. Inhibited by the product CTP, via allosteric rather than competitive inhibition. Its function is as follows. Catalyzes the ATP-dependent amination of UTP to CTP with either L-glutamine or ammonia as the source of nitrogen. Regulates intracellular CTP levels through interactions with the four ribonucleotide triphosphates. This Bdellovibrio bacteriovorus (strain ATCC 15356 / DSM 50701 / NCIMB 9529 / HD100) protein is CTP synthase.